The primary structure comprises 370 residues: Anhydro-N-acetylmuramic acid kinase (370 aa).

ATP is bound at residue 12-19; the sequence is GTSLDGVD.

The protein belongs to the anhydro-N-acetylmuramic acid kinase family.

The catalysed reaction is 1,6-anhydro-N-acetyl-beta-muramate + ATP + H2O = N-acetyl-D-muramate 6-phosphate + ADP + H(+). It functions in the pathway amino-sugar metabolism; 1,6-anhydro-N-acetylmuramate degradation. The protein operates within cell wall biogenesis; peptidoglycan recycling. Functionally, catalyzes the specific phosphorylation of 1,6-anhydro-N-acetylmuramic acid (anhMurNAc) with the simultaneous cleavage of the 1,6-anhydro ring, generating MurNAc-6-P. Is required for the utilization of anhMurNAc either imported from the medium or derived from its own cell wall murein, and thus plays a role in cell wall recycling. This is Anhydro-N-acetylmuramic acid kinase from Pectobacterium carotovorum subsp. carotovorum (strain PC1).